The primary structure comprises 280 residues: Probable endonuclease 4 (280 aa).

Histidine 69, histidine 109, glutamate 145, aspartate 179, histidine 182, histidine 216, aspartate 229, histidine 231, and glutamate 261 together coordinate Zn(2+).

This sequence belongs to the AP endonuclease 2 family. It depends on Zn(2+) as a cofactor.

It catalyses the reaction Endonucleolytic cleavage to 5'-phosphooligonucleotide end-products.. In terms of biological role, endonuclease IV plays a role in DNA repair. It cleaves phosphodiester bonds at apurinic or apyrimidinic (AP) sites, generating a 3'-hydroxyl group and a 5'-terminal sugar phosphate. The protein is Probable endonuclease 4 of Actinobacillus pleuropneumoniae serotype 5b (strain L20).